The following is a 937-amino-acid chain: MHRPRRRGTRPPLLALLAALLLAARGAAAQETELSVSAELVPTSSWNISSELNKDSYLTLDEPMNNITTSLGQTAELHCKVSGNPPPTIRWFKNDAPVVQEPRRLSFRSTIYGSRLRIRNLDTTDTGYFQCVATNGKEVVSSTGVLFVKFGPPPTASPGYSDEYEEDGFCQPYRGIACARFIGNRTVYMESLHMQGEIENQITAAFTMIGTSSHLSDKCSQFAIPSLCHYAFPYCDETSSVPKPRDLCRDECEILENVLCQTEYIFARSNPMILMRLKLPNCEDLPQPESPEAANCIRIGIPMADPINKNHKCYNSTGVDYRGTVSVTKSGRQCQPWNSQYPHTHTFTALRFPELNGGHSYCRNPGNQKEAPWCFTLDENFKSDLCDIPACDSKDSKEKNKMEILYILVPSVAIPLAIALLFFFICVCRNNQKSSSAPVQRQPKHVRGQNVEMSMLNAYKPKSKAKELPLSAVRFMEELGECAFGKIYKGHLYLPGMDHAQLVAIKTLKDYNNPQQWTEFQQEASLMAELHHPNIVCLLGAVTQEQPVCMLFEYINQGDLHEFLIMRSPHSDVGCSSDEDGTVKSSLDHGDFLHIAIQIAAGMEYLSSHFFVHKDLAARNILIGEQLHVKISDLGLSREIYSADYYRVQSKSLLPIRWMPPEAIMYGKFSSDSDIWSFGVVLWEIFSFGLQPYYGFSNQEVIEMVRKRQLLPCSEDCPPRMYSLMTECWNEIPSRRPRFKDIHVRLRSWEGLSSHTSSTTPSGGNATTQTTSLSASPVSNLSNPRYPNYMFPSQGITPQGQIAGFIGPPIPQNQRFIPINGYPIPPGYAAFPAAHYQPTGPPRVIQHCPPPKSRSPSSASGSTSTGHVTSLPSSGSNQEANIPLLPHMSIPNHPGGMGITVFGNKSQKPYKIDSKQASLLGDANIHGHTESMISAEL.

The N-terminal stretch at 1–29 (MHRPRRRGTRPPLLALLAALLLAARGAAA) is a signal peptide. At 30–406 (QETELSVSAE…KEKNKMEILY (377 aa)) the chain is on the extracellular side. The 106-residue stretch at 42-147 (PTSSWNISSE…EVVSSTGVLF (106 aa)) folds into the Ig-like C2-type domain. N-linked (GlcNAc...) asparagine glycosylation is found at Asn47 and Asn66. Cystine bridges form between Cys79-Cys131, Cys170-Cys235, Cys178-Cys228, Cys219-Cys260, Cys248-Cys296, Cys252-Cys282, Cys313-Cys391, Cys334-Cys374, and Cys362-Cys386. The FZ domain occupies 165–299 (EEDGFCQPYR…SPEAANCIRI (135 aa)). Residue Asn184 is glycosylated (N-linked (GlcNAc...) asparagine). Residues 312–391 (KCYNSTGVDY…KSDLCDIPAC (80 aa)) enclose the Kringle domain. Residue Asn315 is glycosylated (N-linked (GlcNAc...) asparagine). Residues 407–427 (ILVPSVAIPLAIALLFFFICV) form a helical membrane-spanning segment. The Cytoplasmic segment spans residues 428–937 (CRNNQKSSSA…HTESMISAEL (510 aa)). The 274-residue stretch at 473–746 (VRFMEELGEC…PRFKDIHVRL (274 aa)) folds into the Protein kinase domain. ATP contacts are provided by residues 479–487 (LGECAFGKI) and Lys506. Tyr645 carries the phosphotyrosine; by autocatalysis modification. Positions 753–762 (SSHTSSTTPS) are enriched in low complexity. 2 disordered regions span residues 753–779 (SSHTSSTTPSGGNATTQTTSLSASPVS) and 833–890 (AAHY…HMSI). The span at 763–779 (GGNATTQTTSLSASPVS) shows a compositional bias: polar residues. The span at 854–864 (RSPSSASGSTS) shows a compositional bias: low complexity. Residues 865-880 (TGHVTSLPSSGSNQEA) are compositionally biased toward polar residues.

Belongs to the protein kinase superfamily. Tyr protein kinase family. ROR subfamily. As to quaternary structure, interacts with ERBB2 and IGFBP5. In terms of tissue distribution, expressed strongly in human heart, lung and kidney, but weakly in the CNS. Isoform Short is strongly expressed in fetal and adult CNS and in a variety of human cancers, including those originating from CNS or PNS neuroectoderm.

Its subcellular location is the membrane. It is found in the cell projection. It localises to the axon. Functionally, has very low kinase activity in vitro and is unlikely to function as a tyrosine kinase in vivo. Receptor for ligand WNT5A which activate downstream NFkB signaling pathway and may result in the inhibition of WNT3A-mediated signaling. In inner ear, crucial for spiral ganglion neurons to innervate auditory hair cells. Via IGFBP5 ligand, forms a complex with ERBB2 to enhance CREB oncogenic signaling. The protein is Inactive tyrosine-protein kinase transmembrane receptor ROR1 (ROR1) of Homo sapiens (Human).